We begin with the raw amino-acid sequence, 308 residues long: Regulating synaptic membrane exocytosis protein 3 (308 aa).

Residues 86–120 (STETGIAVEMRSRVTRQGSRESTDGSTNSNSSDGT) form a disordered region. Positions 109–120 (DGSTNSNSSDGT) are enriched in low complexity. The 119-residue stretch at 156–274 (PMGDVHIAIM…DLSAAVTGWY (119 aa)) folds into the C2 domain. Residues S295 and S298 each carry the phosphoserine modification.

As to quaternary structure, binds PPFIA3. Does not bind RAB3.

Its subcellular location is the synapse. Functionally, regulates synaptic membrane exocytosis. The protein is Regulating synaptic membrane exocytosis protein 3 (RIMS3) of Homo sapiens (Human).